The chain runs to 357 residues: MDDLKAKYLGQIAEAADEAAIEAIRLAAVGKKGEIALMMRELGKMTPEERQTAGPALNALKDEINSALAAKKAALADAALDERLRSEWLDVTLPARNRRQGTLHPISQAREELTAIFAEMGFSVAEGPRIDTDWYNFDALNIPGHHPARAEMDTFYMHRAEGDNRPPHVLRTHTSPVQIRSMEKMGAPLRVICPGGVYRADYDQTHTPMFHQVEGLALDRDISMANLKWTLEEFVKAFFEVDDVELRFRASHFPFTEPSAEVDIRCSWEGGQLKIGEGDDWLEILGSGMVHPKVIAAGGIDPDVYQGFAFGIGIDRLAMLKYGIPDLRAFFDSDLRWLRHYGFAALDMPNLHGGLSR.

Glutamate 257 contacts Mg(2+).

It belongs to the class-II aminoacyl-tRNA synthetase family. Phe-tRNA synthetase alpha subunit type 1 subfamily. In terms of assembly, tetramer of two alpha and two beta subunits. The cofactor is Mg(2+).

Its subcellular location is the cytoplasm. The enzyme catalyses tRNA(Phe) + L-phenylalanine + ATP = L-phenylalanyl-tRNA(Phe) + AMP + diphosphate + H(+). This chain is Phenylalanine--tRNA ligase alpha subunit, found in Ruegeria pomeroyi (strain ATCC 700808 / DSM 15171 / DSS-3) (Silicibacter pomeroyi).